A 690-amino-acid polypeptide reads, in one-letter code: BURP domain-containing protein 14 (690 aa).

An N-terminal signal peptide occupies residues 1–26; that stretch reads MAPPRHARLVAATIAVLLCHLPRSAA. Residues 134 to 163 are disordered; that stretch reads GSSWSKSSSDGDGAAAAAAPAGGGGGGGGG. Positions 135-153 are enriched in low complexity; sequence SSWSKSSSDGDGAAAAAAP. A compositionally biased stretch (gly residues) spans 154-163; sequence AGGGGGGGGG. The N-linked (GlcNAc...) asparagine glycan is linked to Asn178. A compositionally biased stretch (gly residues) spans 201-211; sequence SNGGGGGGGGV. Residues 201 to 232 form a disordered region; it reads SNGGGGGGGGVDSFRRYGKGSQGRNDSFTSYE. N-linked (GlcNAc...) asparagine glycosylation is found at Asn225, Asn317, Asn379, Asn432, Asn450, and Asn601. In terms of domain architecture, BURP spans 477-689; that stretch reads FFRERDLVAG…FQGDMTWTVA (213 aa).

Expressed in panicles.

The protein is BURP domain-containing protein 14 (BURP14) of Oryza sativa subsp. japonica (Rice).